The sequence spans 860 residues: Leucine--tRNA ligase (860 aa).

Residues 42–52 (PYPSGRLHMGH) carry the 'HIGH' region motif. The 'KMSKS' region signature appears at 619-623 (KMSKS). Lys-622 is an ATP binding site.

It belongs to the class-I aminoacyl-tRNA synthetase family.

The protein localises to the cytoplasm. The enzyme catalyses tRNA(Leu) + L-leucine + ATP = L-leucyl-tRNA(Leu) + AMP + diphosphate. In Klebsiella pneumoniae subsp. pneumoniae (strain ATCC 700721 / MGH 78578), this protein is Leucine--tRNA ligase.